A 371-amino-acid chain; its full sequence is tRNA-specific 2-thiouridylase MnmA (371 aa).

Residues 13–20 (GMSGGVDS) and Met39 each bind ATP. Residues 99-101 (NPD) are interaction with target base in tRNA. Cys104 serves as the catalytic Nucleophile. Cys104 and Cys200 are joined by a disulfide. Position 128 (Gly128) interacts with ATP. An interaction with tRNA region spans residues 150 to 152 (KDQ). The Cysteine persulfide intermediate role is filled by Cys200. Residues 308–309 (RY) form an interaction with tRNA region.

It belongs to the MnmA/TRMU family.

It is found in the cytoplasm. The catalysed reaction is S-sulfanyl-L-cysteinyl-[protein] + uridine(34) in tRNA + AH2 + ATP = 2-thiouridine(34) in tRNA + L-cysteinyl-[protein] + A + AMP + diphosphate + H(+). Catalyzes the 2-thiolation of uridine at the wobble position (U34) of tRNA, leading to the formation of s(2)U34. The sequence is that of tRNA-specific 2-thiouridylase MnmA from Bacillus cereus (strain ATCC 10987 / NRS 248).